A 20-amino-acid polypeptide reads, in one-letter code: Putative antimicrobial protein 2 (20 aa).

A disordered region spans residues 1 to 20 (DLPECCSATELELDSGKQTS).

May have antimicrobial activity. The polypeptide is Putative antimicrobial protein 2 (Cenchritis muricatus (Beaded periwinkle)).